The chain runs to 376 residues: Succinate--CoA ligase [ADP-forming] subunit beta (376 aa).

Positions 9–234 constitute an ATP-grasp domain; that stretch reads KAIAKKYGIP…ERELSELEKE (226 aa). Residues Lys-45, 52–54, Glu-91, Glu-94, and Glu-99 each bind ATP; that span reads GRG. Positions 191 and 204 each coordinate Mg(2+). Substrate contacts are provided by residues Asn-254 and 311 to 313; that span reads GIT.

The protein belongs to the succinate/malate CoA ligase beta subunit family. As to quaternary structure, heterotetramer of two alpha and two beta subunits. It depends on Mg(2+) as a cofactor.

It catalyses the reaction succinate + ATP + CoA = succinyl-CoA + ADP + phosphate. The catalysed reaction is GTP + succinate + CoA = succinyl-CoA + GDP + phosphate. It participates in carbohydrate metabolism; tricarboxylic acid cycle; succinate from succinyl-CoA (ligase route): step 1/1. Its function is as follows. Succinyl-CoA synthetase functions in the citric acid cycle (TCA), coupling the hydrolysis of succinyl-CoA to the synthesis of either ATP or GTP and thus represents the only step of substrate-level phosphorylation in the TCA. The beta subunit provides nucleotide specificity of the enzyme and binds the substrate succinate, while the binding sites for coenzyme A and phosphate are found in the alpha subunit. The chain is Succinate--CoA ligase [ADP-forming] subunit beta from Ignicoccus hospitalis (strain KIN4/I / DSM 18386 / JCM 14125).